The primary structure comprises 101 residues: Protein RnfH (101 aa).

The protein belongs to the UPF0125 (RnfH) family.

In Pseudomonas aeruginosa (strain LESB58), this protein is Protein RnfH.